The following is a 431-amino-acid chain: Enolase (431 aa).

Residue Gln-166 coordinates (2R)-2-phosphoglycerate. Glu-208 functions as the Proton donor in the catalytic mechanism. Residues Asp-245, Glu-288, and Asp-315 each coordinate Mg(2+). 4 residues coordinate (2R)-2-phosphoglycerate: Lys-340, Arg-369, Ser-370, and Lys-391. Lys-340 acts as the Proton acceptor in catalysis.

The protein belongs to the enolase family. Requires Mg(2+) as cofactor.

It is found in the cytoplasm. The protein localises to the secreted. It localises to the cell surface. It carries out the reaction (2R)-2-phosphoglycerate = phosphoenolpyruvate + H2O. Its pathway is carbohydrate degradation; glycolysis; pyruvate from D-glyceraldehyde 3-phosphate: step 4/5. Its function is as follows. Catalyzes the reversible conversion of 2-phosphoglycerate (2-PG) into phosphoenolpyruvate (PEP). It is essential for the degradation of carbohydrates via glycolysis. This chain is Enolase, found in Clostridium perfringens (strain ATCC 13124 / DSM 756 / JCM 1290 / NCIMB 6125 / NCTC 8237 / Type A).